We begin with the raw amino-acid sequence, 302 residues long: Probable protein S-acyltransferase 13 (302 aa).

Helical transmembrane passes span 17-37 (SIMI…VVVV) and 56-76 (VLAF…SVVV). Positions 116-166 (RYCRKCNQYKPPRSHHCSVCGRCILKMDHHCVWVVNCVGANNYKSFLLFLF) constitute a DHHC domain. Cys-146 acts as the S-palmitoyl cysteine intermediate in catalysis. 2 helical membrane-spanning segments follow: residues 166 to 186 (FYTF…FLVF) and 204 to 224 (SFVA…FLIM).

It belongs to the DHHC palmitoyltransferase family.

It localises to the cell membrane. The protein resides in the cytoplasmic vesicle membrane. The catalysed reaction is L-cysteinyl-[protein] + hexadecanoyl-CoA = S-hexadecanoyl-L-cysteinyl-[protein] + CoA. Its function is as follows. Palmitoyl acyltransferase. The sequence is that of Probable protein S-acyltransferase 13 (PAT13) from Arabidopsis thaliana (Mouse-ear cress).